We begin with the raw amino-acid sequence, 209 residues long: GTP cyclohydrolase 1 (209 aa).

The Zn(2+) site is built by cysteine 100, histidine 103, and cysteine 171.

The protein belongs to the GTP cyclohydrolase I family. In terms of assembly, toroid-shaped homodecamer, composed of two pentamers of five dimers.

It catalyses the reaction GTP + H2O = 7,8-dihydroneopterin 3'-triphosphate + formate + H(+). It participates in cofactor biosynthesis; 7,8-dihydroneopterin triphosphate biosynthesis; 7,8-dihydroneopterin triphosphate from GTP: step 1/1. The sequence is that of GTP cyclohydrolase 1 from Ralstonia nicotianae (strain ATCC BAA-1114 / GMI1000) (Ralstonia solanacearum).